The primary structure comprises 352 residues: Endophilin-A1 (352 aa).

The tract at residues 1-21 (MSVAGLKKQFHKATQKVSEKV) is membrane-binding amphipathic helix. The disordered stretch occupies residues 1 to 27 (MSVAGLKKQFHKATQKVSEKVGGAEGT). The segment at 1-125 (MSVAGLKKQF…EVGEAMRELS (125 aa)) is binds and tubulates liposomes. Residues 18 to 249 (SEKVGGAEGT…LEERIRQASS (232 aa)) form the BAR domain. A required for dimerization upon membrane association region spans residues 60–87 (PNPASRAKLSMINTMSKIRGQEKGPGYP). Positions 181–248 (EELRQALEKF…RLEERIRQAS (68 aa)) form a coiled coil. The residue at position 262 (serine 262) is a Phosphoserine. Positions 264–289 (EFATGDSTQPNGGLSHTGTPKPPGVQ) are disordered. A compositionally biased stretch (polar residues) spans 268 to 281 (GDSTQPNGGLSHTG). The region spanning 290-349 (MDQPCCRALYDFEPENEGELGFKEGDIITLTNQIDENWYEGMLHGQSGFFPINYVEILVA) is the SH3 domain. Tyrosine 299 is subject to Phosphotyrosine.

The protein belongs to the endophilin family. Monomer; in cytoplasm. Homodimer; when associated with membranes. Interacts with SYNJ1. Interacts with DNM1. Interacts with MAP4K3; the interaction appears to regulate MAP4K3-mediated JNK activation. Interacts with OPHN1. Interacts with PDCD6IP. Interacts with BIN2. Interacts with ATXN2. Interacts with ADAM9 and ADAM15 cytoplasmic tails. Interacts with TMEM108. Interacts with ADGRB2.

It is found in the cytoplasm. It localises to the membrane. The protein localises to the early endosome. The protein resides in the presynapse. Functionally, implicated in synaptic vesicle endocytosis. May recruit other proteins to membranes with high curvature. Required for BDNF-dependent dendrite outgrowth. Cooperates with SH3GL2 to mediate BDNF-NTRK2 early endocytic trafficking and signaling from early endosomes. This is Endophilin-A1 (Sh3gl2) from Mus musculus (Mouse).